The following is a 248-amino-acid chain: 4-hydroxy-tetrahydrodipicolinate reductase (248 aa).

NAD(+) is bound by residues 74-76 and 99-102; these read GTT and SANF. The active-site Proton donor/acceptor is the His134. His135 contacts (S)-2,3,4,5-tetrahydrodipicolinate. Catalysis depends on Lys138, which acts as the Proton donor. A (S)-2,3,4,5-tetrahydrodipicolinate-binding site is contributed by 144 to 145; it reads GT.

The protein belongs to the DapB family.

The protein localises to the cytoplasm. The enzyme catalyses (S)-2,3,4,5-tetrahydrodipicolinate + NAD(+) + H2O = (2S,4S)-4-hydroxy-2,3,4,5-tetrahydrodipicolinate + NADH + H(+). It catalyses the reaction (S)-2,3,4,5-tetrahydrodipicolinate + NADP(+) + H2O = (2S,4S)-4-hydroxy-2,3,4,5-tetrahydrodipicolinate + NADPH + H(+). The protein operates within amino-acid biosynthesis; L-lysine biosynthesis via DAP pathway; (S)-tetrahydrodipicolinate from L-aspartate: step 4/4. Catalyzes the conversion of 4-hydroxy-tetrahydrodipicolinate (HTPA) to tetrahydrodipicolinate. The sequence is that of 4-hydroxy-tetrahydrodipicolinate reductase from Chlorobium phaeobacteroides (strain BS1).